The chain runs to 204 residues: Large ribosomal subunit protein bL17 (204 aa).

Residues 124-204 are disordered; sequence QAVGEAERAR…DDDGPAESKS (81 aa). Over residues 128 to 142 the composition is skewed to basic and acidic residues; it reads EAERARGTRFSERRK. Residues 156 to 191 are compositionally biased toward low complexity; sequence SESPTAAAVAAQSAEEQAPVEETLTAQAAETSAATV. Positions 192-204 are enriched in acidic residues; that stretch reads EETDDDGPAESKS.

Belongs to the bacterial ribosomal protein bL17 family. In terms of assembly, part of the 50S ribosomal subunit. Contacts protein L32.

The polypeptide is Large ribosomal subunit protein bL17 (Frankia alni (strain DSM 45986 / CECT 9034 / ACN14a)).